Consider the following 248-residue polypeptide: Large ribosomal subunit protein uL30 (248 aa).

At M1 the chain carries N-acetylmethionine. 4 consecutive repeat copies span residues 7-18 (KKKKVPAVPETL), 19-30 (KKKRKNFAELKI), 31-42 (KRLRKKFAQKML), and 43-54 (RKARRKLIYEKA). A 4 X 12 AA tandem repeats region spans residues 7 to 54 (KKKKVPAVPETLKKKRKNFAELKIKRLRKKFAQKMLRKARRKLIYEKA). At T17 the chain carries Phosphothreonine. Position 124 is an N6-acetyllysine (K124). K127 is modified (N6-succinyllysine). At Y139 the chain carries Phosphotyrosine.

This sequence belongs to the universal ribosomal protein uL30 family. As to quaternary structure, component of the large ribosomal subunit. Homodimer. Interacts with DHX33.

Its subcellular location is the cytoplasm. Functionally, component of the large ribosomal subunit. The ribosome is a large ribonucleoprotein complex responsible for the synthesis of proteins in the cell. Binds to G-rich structures in 28S rRNA and in mRNAs. Plays a regulatory role in the translation apparatus; inhibits cell-free translation of mRNAs. This is Large ribosomal subunit protein uL30 (RPL7) from Bos taurus (Bovine).